A 289-amino-acid polypeptide reads, in one-letter code: 33 kDa chaperonin (289 aa).

Disulfide bonds link C225-C227 and C258-C261.

The protein belongs to the HSP33 family. In terms of processing, under oxidizing conditions two disulfide bonds are formed involving the reactive cysteines. Under reducing conditions zinc is bound to the reactive cysteines and the protein is inactive.

Its subcellular location is the cytoplasm. Functionally, redox regulated molecular chaperone. Protects both thermally unfolding and oxidatively damaged proteins from irreversible aggregation. Plays an important role in the bacterial defense system toward oxidative stress. The polypeptide is 33 kDa chaperonin (Nitrosococcus oceani (strain ATCC 19707 / BCRC 17464 / JCM 30415 / NCIMB 11848 / C-107)).